The following is a 224-amino-acid chain: MLGQPTRAQLAALVDHTLLKPETTRADVAALVAEAAELGVYAVCVSPSMVPVAVQAGGVRVAAVTGFPSGKHVSSVKAHEAAAALASGASEIDMVIDIGAALCGDIDAVRSDIEAVRAAAAGAVLKVIVESAVLLGQSNAHTLVDACRAAEDAGADFVKTSTGCHPAGGATVRAVELMAETVGPRLGVKASGGIRTAADAVAMLNAGATRLGLSGTRAVLDGLS.

Asp93 (proton donor/acceptor) is an active-site residue. The active-site Schiff-base intermediate with acetaldehyde is the Lys159. Lys189 functions as the Proton donor/acceptor in the catalytic mechanism.

This sequence belongs to the DeoC/FbaB aldolase family. DeoC type 1 subfamily.

The protein resides in the cytoplasm. It catalyses the reaction 2-deoxy-D-ribose 5-phosphate = D-glyceraldehyde 3-phosphate + acetaldehyde. The protein operates within carbohydrate degradation; 2-deoxy-D-ribose 1-phosphate degradation; D-glyceraldehyde 3-phosphate and acetaldehyde from 2-deoxy-alpha-D-ribose 1-phosphate: step 2/2. Its function is as follows. Catalyzes a reversible aldol reaction between acetaldehyde and D-glyceraldehyde 3-phosphate to generate 2-deoxy-D-ribose 5-phosphate. The polypeptide is Deoxyribose-phosphate aldolase (Mycobacterium bovis (strain ATCC BAA-935 / AF2122/97)).